A 269-amino-acid chain; its full sequence is 4-hydroxy-tetrahydrodipicolinate reductase (269 aa).

Residues 11–16 and E37 contribute to the NAD(+) site; that span reads GASGRM. R38 contributes to the NADP(+) binding site. Residues 101 to 103 and 125 to 128 each bind NAD(+); these read GTT and AGNM. H158 functions as the Proton donor/acceptor in the catalytic mechanism. Residue H159 coordinates (S)-2,3,4,5-tetrahydrodipicolinate. K162 (proton donor) is an active-site residue. Position 168–169 (168–169) interacts with (S)-2,3,4,5-tetrahydrodipicolinate; sequence GT.

This sequence belongs to the DapB family.

It localises to the cytoplasm. The enzyme catalyses (S)-2,3,4,5-tetrahydrodipicolinate + NAD(+) + H2O = (2S,4S)-4-hydroxy-2,3,4,5-tetrahydrodipicolinate + NADH + H(+). It carries out the reaction (S)-2,3,4,5-tetrahydrodipicolinate + NADP(+) + H2O = (2S,4S)-4-hydroxy-2,3,4,5-tetrahydrodipicolinate + NADPH + H(+). The protein operates within amino-acid biosynthesis; L-lysine biosynthesis via DAP pathway; (S)-tetrahydrodipicolinate from L-aspartate: step 4/4. In terms of biological role, catalyzes the conversion of 4-hydroxy-tetrahydrodipicolinate (HTPA) to tetrahydrodipicolinate. The chain is 4-hydroxy-tetrahydrodipicolinate reductase from Cereibacter sphaeroides (strain ATCC 17023 / DSM 158 / JCM 6121 / CCUG 31486 / LMG 2827 / NBRC 12203 / NCIMB 8253 / ATH 2.4.1.) (Rhodobacter sphaeroides).